Reading from the N-terminus, the 165-residue chain is Lipoprotein signal peptidase (165 aa).

A run of 3 helical transmembrane segments spans residues Ser6–Ile26, Gly68–Phe88, and Ile95–Ile115. Catalysis depends on residues Asp125 and Asp141. The helical transmembrane segment at Ile132 to Ile152 threads the bilayer.

It belongs to the peptidase A8 family.

The protein localises to the cell inner membrane. The enzyme catalyses Release of signal peptides from bacterial membrane prolipoproteins. Hydrolyzes -Xaa-Yaa-Zaa-|-(S,diacylglyceryl)Cys-, in which Xaa is hydrophobic (preferably Leu), and Yaa (Ala or Ser) and Zaa (Gly or Ala) have small, neutral side chains.. It functions in the pathway protein modification; lipoprotein biosynthesis (signal peptide cleavage). Its function is as follows. This protein specifically catalyzes the removal of signal peptides from prolipoproteins. This chain is Lipoprotein signal peptidase, found in Fusobacterium nucleatum subsp. nucleatum (strain ATCC 25586 / DSM 15643 / BCRC 10681 / CIP 101130 / JCM 8532 / KCTC 2640 / LMG 13131 / VPI 4355).